Consider the following 507-residue polypeptide: uncharacterized protein (507 aa).

The span at 1 to 12 (MEKSISSISKAS) shows a compositional bias: low complexity. The segment at 1–20 (MEKSISSISKASMNSDEKLD) is disordered. 12 consecutive transmembrane segments (helical) span residues 57 to 74 (FDFRILPLLALLYLFNAL), 100 to 120 (IMISIFYIPFVLCAFPFSYLY), 126 to 146 (ARILPFFMLSFGAMSLCQAAV), 157 to 177 (WFLGMAESAVLPGVVYYLTTF), 189 to 209 (IFYAAANVSSAFGGLLAYGVF), 221 to 241 (YLFLIEGGVTFLCAIVIFLVL), 283 to 303 (VFKHPIAILWLLEEMALGVPL), 326 to 346 (LMTVAPAISGAIWLLVFAFIS), 353 to 373 (GIVLIAAISTTMIGFIVYGSI), 379 to 399 (IGVSYFACFLMTAGAAASSVL), 416 to 436 (VFTSVGVPLANVMGLVSANIF), and 445 to 465 (VPALGITAGFGGLGILLVASI).

Belongs to the major facilitator superfamily. Allantoate permease family.

It is found in the endoplasmic reticulum. The protein resides in the membrane. This is an uncharacterized protein from Schizosaccharomyces pombe (strain 972 / ATCC 24843) (Fission yeast).